An 827-amino-acid polypeptide reads, in one-letter code: Tuftelin-interacting protein 11 (827 aa).

Disordered regions lie at residues 31-129 and 179-203; these read FNPH…KGFV and QRKG…DFPV. A compositionally biased stretch (basic and acidic residues) spans 41–60; that stretch reads TKEEATYGVWAERDSDEERP. Positions 88–98 are enriched in acidic residues; the sequence is DVSDEDSDEDE. Basic and acidic residues predominate over residues 99-112; it reads KPVKQEEIPKEFVP. Residues 145–191 form the G-patch domain; the sequence is TKGIGQKLLQKMGYVPGRGLGKNAQGIINPIEAKQRKGKGAVGAYGS.

Belongs to the TFP11/STIP family. As to quaternary structure, identified in the spliceosome C complex.

The protein resides in the nucleus. Its function is as follows. Involved in pre-mRNA splicing, specifically in spliceosome disassembly during late-stage splicing events. In Gallus gallus (Chicken), this protein is Tuftelin-interacting protein 11 (TFIP11).